The primary structure comprises 580 residues: Double-stranded RNA-binding protein Staufen homolog 1 (580 aa).

N-acetylserine is present on serine 2. Residues 34–44 show a composition bias toward polar residues; that stretch reads SIPSTTSSLPS. Positions 34 to 59 are disordered; that stretch reads SIPSTTSSLPSENAGRPIQNSALPSA. The DRBM 1 domain maps to 72–162; that stretch reads TPTVELNALC…AAKALRTLQS (91 aa). Arginine 108 bears the Asymmetric dimethylarginine mark. Arginine 115 carries the asymmetric dimethylarginine; alternate modification. An Omega-N-methylarginine; alternate modification is found at arginine 115. The disordered stretch occupies residues 158 to 189; sequence RTLQSEPLPERPEGRRPGEQVNGRESEEENLN. The segment covering 165–182 has biased composition (basic and acidic residues); the sequence is LPERPEGRRPGEQVNGRE. Serine 183 carries the post-translational modification Phosphoserine. Residues 191–258 enclose the DRBM 2 domain; sequence SEISQVFEIA…AIAVLEELKK (68 aa). Serine 285 carries the phosphoserine modification. One can recognise a DRBM 3 domain in the interval 293-361; it reads NPISRLAQIQ…AENMLEILGF (69 aa). Residues 367-404 form a disordered region; it reads QPTKPALKSEEKTPIKKPGDGRKVTFFEPGSGDENGTS. Residues 373–391 are compositionally biased toward basic and acidic residues; sequence LKSEEKTPIKKPGDGRKVT. The residue at position 397 (serine 397) is a Phosphoserine.

As to quaternary structure, binds tubulin. Binds with low affinity single-stranded RNA or DNA homopolymers. Interacts with CASC3 in an RNA-dependent manner. Identified in a mRNP complex, at least composed of DHX9, DDX3X, ELAVL1, HNRNPU, IGF2BP1, ILF3, PABPC1, PCBP2, PTBP2, STAU1, STAU2, SYNCRIP and YBX1. Interacts with the influenza virus nonstructural protein NS1.

The protein localises to the cytoplasm. It is found in the rough endoplasmic reticulum. In terms of biological role, binds double-stranded RNA (regardless of the sequence) and tubulin. May play a role in specific positioning of mRNAs at given sites in the cell by cross-linking cytoskeletal and RNA components, and in stimulating their translation at the site. In Ailuropoda melanoleuca (Giant panda), this protein is Double-stranded RNA-binding protein Staufen homolog 1 (STAU1).